Here is a 108-residue protein sequence, read N- to C-terminus: Trissin (108 aa).

The signal sequence occupies residues Met1–Ala29. Disulfide bonds link Cys32–Cys43, Cys35–Cys52, and Cys39–Cys51. Positions Arg57–Pro108 are excised as a propeptide.

It is found in the secreted. Functionally, activates the G-protein coupled receptor TrissinR in vitro, leading to increased intracellular calcium ion levels. The chain is Trissin from Drosophila melanogaster (Fruit fly).